The primary structure comprises 393 residues: Bifunctional enzyme IspD/IspF (393 aa).

Residues 1 to 234 (MTTSQRTAAI…ARLAASLGDI (234 aa)) are 2-C-methyl-D-erythritol 4-phosphate cytidylyltransferase. The 2-C-methyl-D-erythritol 2,4-cyclodiphosphate synthase stretch occupies residues 235–393 (RTGTGYDVHA…SATIRLPWGA (159 aa)). A divalent metal cation contacts are provided by Asp241 and His243. Residues 241–243 (DVH) and 267–268 (HS) each bind 4-CDP-2-C-methyl-D-erythritol 2-phosphate. An a divalent metal cation-binding site is contributed by His275. Residues 289-291 (DIG), 365-368 (TTSE), Phe372, and Arg375 contribute to the 4-CDP-2-C-methyl-D-erythritol 2-phosphate site.

This sequence in the N-terminal section; belongs to the IspD/TarI cytidylyltransferase family. IspD subfamily. In the C-terminal section; belongs to the IspF family. A divalent metal cation serves as cofactor.

It carries out the reaction 2-C-methyl-D-erythritol 4-phosphate + CTP + H(+) = 4-CDP-2-C-methyl-D-erythritol + diphosphate. The enzyme catalyses 4-CDP-2-C-methyl-D-erythritol 2-phosphate = 2-C-methyl-D-erythritol 2,4-cyclic diphosphate + CMP. It functions in the pathway isoprenoid biosynthesis; isopentenyl diphosphate biosynthesis via DXP pathway; isopentenyl diphosphate from 1-deoxy-D-xylulose 5-phosphate: step 2/6. The protein operates within isoprenoid biosynthesis; isopentenyl diphosphate biosynthesis via DXP pathway; isopentenyl diphosphate from 1-deoxy-D-xylulose 5-phosphate: step 4/6. Its function is as follows. Bifunctional enzyme that catalyzes the formation of 4-diphosphocytidyl-2-C-methyl-D-erythritol from CTP and 2-C-methyl-D-erythritol 4-phosphate (MEP) (IspD), and catalyzes the conversion of 4-diphosphocytidyl-2-C-methyl-D-erythritol 2-phosphate (CDP-ME2P) to 2-C-methyl-D-erythritol 2,4-cyclodiphosphate (ME-CPP) with a corresponding release of cytidine 5-monophosphate (CMP) (IspF). The chain is Bifunctional enzyme IspD/IspF from Bradyrhizobium sp. (strain ORS 278).